The primary structure comprises 487 residues: Lysine--tRNA ligase (487 aa).

Residues E398 and E405 each coordinate Mg(2+).

It belongs to the class-II aminoacyl-tRNA synthetase family. Homodimer. Mg(2+) is required as a cofactor.

The protein resides in the cytoplasm. The enzyme catalyses tRNA(Lys) + L-lysine + ATP = L-lysyl-tRNA(Lys) + AMP + diphosphate. In Mycoplasma mobile (strain ATCC 43663 / 163K / NCTC 11711) (Mesomycoplasma mobile), this protein is Lysine--tRNA ligase.